The sequence spans 494 residues: Ketol-acid reductoisomerase (NADP(+)) (494 aa).

The KARI N-terminal Rossmann domain occupies 14–208; that stretch reads LDQLGRCRFM…GGHRAGCLES (195 aa). NADP(+) contacts are provided by residues 45 to 48, arginine 68, arginine 76, serine 78, and 108 to 110; these read CGAQ and DKQ. The active site involves histidine 132. Glycine 158 contributes to the NADP(+) binding site. KARI C-terminal knotted domains are found at residues 209 to 344 and 345 to 487; these read SFVA…NYPE and TDVE…MTDM. Residues aspartate 217, glutamate 221, glutamate 389, and glutamate 393 each contribute to the Mg(2+) site. Serine 414 lines the substrate pocket.

The protein belongs to the ketol-acid reductoisomerase family. It depends on Mg(2+) as a cofactor.

It catalyses the reaction (2R)-2,3-dihydroxy-3-methylbutanoate + NADP(+) = (2S)-2-acetolactate + NADPH + H(+). The catalysed reaction is (2R,3R)-2,3-dihydroxy-3-methylpentanoate + NADP(+) = (S)-2-ethyl-2-hydroxy-3-oxobutanoate + NADPH + H(+). It participates in amino-acid biosynthesis; L-isoleucine biosynthesis; L-isoleucine from 2-oxobutanoate: step 2/4. It functions in the pathway amino-acid biosynthesis; L-valine biosynthesis; L-valine from pyruvate: step 2/4. Its function is as follows. Involved in the biosynthesis of branched-chain amino acids (BCAA). Catalyzes an alkyl-migration followed by a ketol-acid reduction of (S)-2-acetolactate (S2AL) to yield (R)-2,3-dihydroxy-isovalerate. In the isomerase reaction, S2AL is rearranged via a Mg-dependent methyl migration to produce 3-hydroxy-3-methyl-2-ketobutyrate (HMKB). In the reductase reaction, this 2-ketoacid undergoes a metal-dependent reduction by NADPH to yield (R)-2,3-dihydroxy-isovalerate. In Vibrio parahaemolyticus serotype O3:K6 (strain RIMD 2210633), this protein is Ketol-acid reductoisomerase (NADP(+)).